The chain runs to 202 residues: Imidazoleglycerol-phosphate dehydratase (202 aa).

The protein belongs to the imidazoleglycerol-phosphate dehydratase family.

Its subcellular location is the cytoplasm. The catalysed reaction is D-erythro-1-(imidazol-4-yl)glycerol 3-phosphate = 3-(imidazol-4-yl)-2-oxopropyl phosphate + H2O. It functions in the pathway amino-acid biosynthesis; L-histidine biosynthesis; L-histidine from 5-phospho-alpha-D-ribose 1-diphosphate: step 6/9. The chain is Imidazoleglycerol-phosphate dehydratase from Acinetobacter baylyi (strain ATCC 33305 / BD413 / ADP1).